A 228-amino-acid polypeptide reads, in one-letter code: Small ribosomal subunit protein uS3 (228 aa).

One can recognise a KH type-2 domain in the interval 39–107; it reads VRAYLQDKLK…PVHINIEEIR (69 aa).

It belongs to the universal ribosomal protein uS3 family. In terms of assembly, part of the 30S ribosomal subunit. Forms a tight complex with proteins S10 and S14.

Its function is as follows. Binds the lower part of the 30S subunit head. Binds mRNA in the 70S ribosome, positioning it for translation. This is Small ribosomal subunit protein uS3 from Ectopseudomonas mendocina (strain ymp) (Pseudomonas mendocina).